Reading from the N-terminus, the 215-residue chain is MTVQRFIEYTPFDSNGQQLPGESRKITLNVLLEDSGNYLIHRDILRHQLSQKQGTVSTKTRSEVRGGGKKPWRQKGTGRARAGSSRSPLWKGGGVIFGPKPKTANLKLNKKERNLALQTLLYNKRDIITQVSTLDIKNVKTKEFYNFCKEKGFNLNEKLLVIDSEKTTPLKLSTRNLKNVELISASNLNTLSLLKAKKILVTTSALNDIKEIYCG.

The tract at residues 51–87 (QKQGTVSTKTRSEVRGGGKKPWRQKGTGRARAGSSRS) is disordered. A compositionally biased stretch (basic residues) spans 67–78 (GGKKPWRQKGTG).

This sequence belongs to the universal ribosomal protein uL4 family. As to quaternary structure, part of the 50S ribosomal subunit.

The protein localises to the plastid. It is found in the chloroplast. Its function is as follows. Probably binds the 23S rRNA. This chain is Large ribosomal subunit protein uL4c (rpl4), found in Thalassiosira pseudonana (Marine diatom).